Here is a 117-residue protein sequence, read N- to C-terminus: DNA-directed RNA polymerase II subunit RPB11 (117 aa).

It belongs to the archaeal Rpo11/eukaryotic RPB11/RPC19 RNA polymerase subunit family. As to quaternary structure, component of the RNA polymerase II (Pol II) complex consisting of 12 subunits.

It is found in the nucleus. In terms of biological role, DNA-dependent RNA polymerase catalyzes the transcription of DNA into RNA using the four ribonucleoside triphosphates as substrates. Component of RNA polymerase II which synthesizes mRNA precursors and many functional non-coding RNAs. Pol II is the central component of the basal RNA polymerase II transcription machinery. It is composed of mobile elements that move relative to each other. RPB11 is part of the core element with the central large cleft. This is DNA-directed RNA polymerase II subunit RPB11 from Drosophila melanogaster (Fruit fly).